An 832-amino-acid polypeptide reads, in one-letter code: Histone acetyltransferase KAT2B (832 aa).

A compositionally biased stretch (gly residues) spans 1–22 (MSEAGGAGPGGCGAGAGAGAGP). Disordered stretches follow at residues 1–54 (MSEA…ACGP) and 395–436 (SYNS…DSHV). A compositionally biased stretch (pro residues) spans 24–39 (ALPPQPAALPPAPPQG). The span at 40–54 (SPCAAAAGGSGACGP) shows a compositional bias: low complexity. Residues 395–413 (SYNSTSSSLEQPNAGSSSP) are compositionally biased toward polar residues. Residues 425–436 (PGEKRKMTDSHV) show a composition bias toward basic and acidic residues. The 149-residue stretch at 503–651 (LNQKPNKKIL…GATLMGCELN (149 aa)) folds into the N-acetyltransferase domain. Glu-570 serves as the catalytic Proton donor/acceptor. Residues 574 to 576 (CAV), 581 to 587 (QVKGYGT), and 612 to 615 (YAIG) each bind acetyl-CoA. The disordered stretch occupies residues 706-725 (IRETGWKPSGKEKSKEPRDP). Basic and acidic residues predominate over residues 714 to 725 (SGKEKSKEPRDP). Positions 723–827 (RDPDQLYSTL…KFFFSKIKEA (105 aa)) constitute a Bromo domain.

This sequence belongs to the acetyltransferase family. GCN5 subfamily. In terms of assembly, interacts with SIRT1. Interacts (unsumoylated form) with NR2C1; the interaction promotes transactivation activity. Interacts with EP300, CREBBP and DDX17. Interacts with NCOA1 and NCOA3. Component of a large chromatin remodeling complex, at least composed of MYSM1, KAT2B/PCAF, RBM10 and KIF11/TRIP5. Interacts with NR2C2 (hypophosphorylated and unsumoylated form); the interaction promotes the transactivation activity of NR2C2. Interacts with KLF1; the interaction does not acetylate KLF1 and there is no enhancement of its transactivational activity. Interacts with NFE4. Interacts with MECOM. Interacts with E2F1; the interaction acetylates E2F1 augmenting its DNA-binding and transcriptional activity. Interacts with NPAS2, BMAL1 and CLOCK. Interacts with BCAS3. Interacts with CEBPB. Interacts with NR4A3. Interacts with NFATC2. Interacts with TBX5. Interacts with PLK4. Interacts with RB1; this interaction leads to RB1 acetylation. Interacts with VRK1. (Microbial infection) Interacts with and acetylates HIV-1 Tat. As to quaternary structure, (Microbial infection) Interacts with HTLV-1 Tax. In terms of tissue distribution, ubiquitously expressed but most abundant in heart and skeletal muscle. Also expressed in the skin, in keratinocytes (at protein level).

The protein resides in the nucleus. The protein localises to the cytoplasm. Its subcellular location is the cytoskeleton. It localises to the microtubule organizing center. It is found in the centrosome. The enzyme catalyses L-lysyl-[histone] + acetyl-CoA = N(6)-acetyl-L-lysyl-[histone] + CoA + H(+). It catalyses the reaction L-lysyl-[protein] + acetyl-CoA = N(6)-acetyl-L-lysyl-[protein] + CoA + H(+). It carries out the reaction spermidine + acetyl-CoA = N(8)-acetylspermidine + CoA + H(+). With respect to regulation, activated in vitro by very low concentrations of spermidine, but inhibited at spermidine concentrations higher than 4 uM. The activating effect of low spermidine concentrations may be mediated by N(8)-acetylspermidine produced by KAT2B/P/CAF itself acting as a positive feedback loop. Its function is as follows. Functions as a histone acetyltransferase (HAT) to promote transcriptional activation. Has significant histone acetyltransferase activity with core histones (H3 and H4), and also with nucleosome core particles. Has a a strong preference for acetylation of H3 at 'Lys-9' (H3K9ac). Also acetylates non-histone proteins, such as ACLY, MAPRE1/EB1, PLK4, RRP9/U3-55K and TBX5. Inhibits cell-cycle progression and counteracts the mitogenic activity of the adenoviral oncoprotein E1A. Acts as a circadian transcriptional coactivator which enhances the activity of the circadian transcriptional activators: NPAS2-BMAL1 and CLOCK-BMAL1 heterodimers. Involved in heart and limb development by mediating acetylation of TBX5, acetylation regulating nucleocytoplasmic shuttling of TBX5. Acts as a negative regulator of centrosome amplification by mediating acetylation of PLK4. Acetylates RRP9/U3-55K, a core subunit of the U3 snoRNP complex, impairing pre-rRNA processing. Acetylates MAPRE1/EB1, promoting dynamic kinetochore-microtubule interactions in early mitosis. Also acetylates spermidine. Functionally, (Microbial infection) In case of HIV-1 infection, it is recruited by the viral protein Tat. Regulates Tat's transactivating activity and may help inducing chromatin remodeling of proviral genes. This chain is Histone acetyltransferase KAT2B, found in Homo sapiens (Human).